Here is a 429-residue protein sequence, read N- to C-terminus: Histidine--tRNA ligase (429 aa).

It belongs to the class-II aminoacyl-tRNA synthetase family. In terms of assembly, homodimer.

It localises to the cytoplasm. It catalyses the reaction tRNA(His) + L-histidine + ATP = L-histidyl-tRNA(His) + AMP + diphosphate + H(+). This Oceanobacillus iheyensis (strain DSM 14371 / CIP 107618 / JCM 11309 / KCTC 3954 / HTE831) protein is Histidine--tRNA ligase.